Consider the following 105-residue polypeptide: Venom metalloprotease inhibitor (105 aa).

The N-terminal stretch at 1–21 (MFRFVCVLFIALVVFCTTTSA) is a signal peptide. 5 cysteine pairs are disulfide-bonded: cysteine 26/cysteine 61, cysteine 35/cysteine 57, cysteine 39/cysteine 50, cysteine 43/cysteine 83, and cysteine 63/cysteine 77. Positions 26–83 (CNRPNEEYRCGSACQTTCATLGQRCPIMNIRCNDACYCKEGYARYGDDTGMCVSISQC) constitute a TIL domain.

Belongs to the serine protease inhibitor-like (TIL domain-containing) family. As to expression, expressed by the venom gland.

The protein resides in the secreted. Functionally, inhibits metalloprotease (human MMP3), trypsin, chymotrypsin, plasmin and microbial serine protease (proteinase K). Exhibits antifibrinolytic activity by binding plasmin and inhibiting it. Does not inhibit elastase, thrombin or microbial serine protease (subtilisin A). This Bombus ignitus (Bumblebee) protein is Venom metalloprotease inhibitor.